The following is a 341-amino-acid chain: tRNA dimethylallyltransferase (341 aa).

15-22 (GPTAAGKT) is a binding site for ATP. 17–22 (TAAGKT) serves as a coordination point for substrate. Interaction with substrate tRNA regions lie at residues 44–47 (DSAL), 168–172 (QRIQR), 253–258 (RCVGYR), and 302–309 (KRQITWLR).

This sequence belongs to the IPP transferase family. In terms of assembly, monomer. Mg(2+) is required as a cofactor.

It catalyses the reaction adenosine(37) in tRNA + dimethylallyl diphosphate = N(6)-dimethylallyladenosine(37) in tRNA + diphosphate. Catalyzes the transfer of a dimethylallyl group onto the adenine at position 37 in tRNAs that read codons beginning with uridine, leading to the formation of N6-(dimethylallyl)adenosine (i(6)A). This chain is tRNA dimethylallyltransferase, found in Verminephrobacter eiseniae (strain EF01-2).